Reading from the N-terminus, the 281-residue chain is 2,3,4,5-tetrahydropyridine-2,6-dicarboxylate N-succinyltransferase (281 aa).

Substrate-binding residues include R108 and D145.

It belongs to the transferase hexapeptide repeat family. Homotrimer.

The protein resides in the cytoplasm. It carries out the reaction (S)-2,3,4,5-tetrahydrodipicolinate + succinyl-CoA + H2O = (S)-2-succinylamino-6-oxoheptanedioate + CoA. It functions in the pathway amino-acid biosynthesis; L-lysine biosynthesis via DAP pathway; LL-2,6-diaminopimelate from (S)-tetrahydrodipicolinate (succinylase route): step 1/3. The sequence is that of 2,3,4,5-tetrahydropyridine-2,6-dicarboxylate N-succinyltransferase from Nitrobacter hamburgensis (strain DSM 10229 / NCIMB 13809 / X14).